The chain runs to 192 residues: uncharacterized protein (192 aa).

The Nudix hydrolase domain maps to 29–160; that stretch reads HRQAAVLIPI…PLDIYRRGDS (132 aa). Positions 67-89 match the Nudix box motif; that stretch reads GAVDDTDASVIAAALREAEEEVA. Positions 83 and 87 each coordinate Mg(2+).

It belongs to the Nudix hydrolase family. PCD1 subfamily. It depends on Mn(2+) as a cofactor. Requires Mg(2+) as cofactor.

Probably mediates the hydrolysis of some nucleoside diphosphate derivatives. This is an uncharacterized protein from Escherichia coli (strain SMS-3-5 / SECEC).